The sequence spans 468 residues: Cysteine--tRNA ligase (468 aa).

Position 28 (cysteine 28) interacts with Zn(2+). The short motif at 30–40 (PTVYNYIHIGN) is the 'HIGH' region element. Zn(2+)-binding residues include cysteine 212, histidine 237, and glutamate 241. Residues 271 to 275 (KMSKS) carry the 'KMSKS' region motif. Lysine 274 contributes to the ATP binding site.

This sequence belongs to the class-I aminoacyl-tRNA synthetase family. Monomer. Zn(2+) is required as a cofactor.

The protein localises to the cytoplasm. The enzyme catalyses tRNA(Cys) + L-cysteine + ATP = L-cysteinyl-tRNA(Cys) + AMP + diphosphate. This chain is Cysteine--tRNA ligase, found in Lacticaseibacillus casei (strain BL23) (Lactobacillus casei).